The following is a 320-amino-acid chain: Cytosolic Fe-S cluster assembly factor NUBP1 (320 aa).

At Met1 the chain carries N-acetylmethionine. [4Fe-4S] cluster is bound by residues Cys8, Cys22, Cys25, and Cys31. Gly62–Ser69 contributes to the ATP binding site. Residues Cys235 and Cys238 each coordinate [4Fe-4S] cluster. Residue Ser319 is modified to Phosphoserine.

This sequence belongs to the Mrp/NBP35 ATP-binding proteins family. NUBP1/NBP35 subfamily. Heterotetramer of 2 NUBP1 and 2 NUBP2 chains. Interacts with KIFC1. Interacts with NUBP2. Interacts with the BBS/CCT complex subunit CCT1. [4Fe-4S] cluster serves as cofactor.

It localises to the cytoplasm. It is found in the nucleus. Its subcellular location is the cell projection. The protein localises to the cytoskeleton. The protein resides in the cilium axoneme. It localises to the cilium basal body. It is found in the microtubule organizing center. Its subcellular location is the centrosome. The protein localises to the centriole. Component of the cytosolic iron-sulfur (Fe/S) protein assembly (CIA) machinery. Required for maturation of extramitochondrial Fe-S proteins. The NUBP1-NUBP2 heterotetramer forms a Fe-S scaffold complex, mediating the de novo assembly of an Fe-S cluster and its transfer to target apoproteins. Implicated in the regulation of centrosome duplication. Negatively regulates cilium formation and structure. The sequence is that of Cytosolic Fe-S cluster assembly factor NUBP1 from Homo sapiens (Human).